The sequence spans 490 residues: MTQWEVVIGLETHAQLSTVSKIFSGAPTQFGAEPNTQACPVDLALPGVLPVLNRGAVERAIRFGLAIGSTIAPRSIFARKNYFYPDLPKGYQISQYEIPVVQGGQITIQVPANEKAGKPAYEKTVNLTRAHLEEDAGKSLHEDFAGMTGIDLNRAGTPLLEIVTEPEMRSAAEAVAYAKSLHALVVWLGICDGNMQEGSFRCDANVSVRPVGQEKFGTRAEIKNLNSFRFLEEAINYEVRRQIELIEDGGEVVQETRLYDPDKRETRSMRSKEDAHDYRYFPDPDLMPLVIGQDWIERVQAGMPELPAAMQQRFVEQYGVSAYDAGVLTSSKAMAAYFEAVVAKAGAANAKIAANWLMGDVSSQLNRDGIEIDAIPVSAAQLALVLQRIADGTISNKIAKEIFSAIWDEKATDEAAADRIIDAKGLKQISDTGALEAIIDEVLAANAKSVEEFRAGKEKAFNALIGQAMKATKGKANPQQVNELLKKKLG.

Belongs to the GatB/GatE family. GatB subfamily. As to quaternary structure, heterotrimer of A, B and C subunits.

The enzyme catalyses L-glutamyl-tRNA(Gln) + L-glutamine + ATP + H2O = L-glutaminyl-tRNA(Gln) + L-glutamate + ADP + phosphate + H(+). It carries out the reaction L-aspartyl-tRNA(Asn) + L-glutamine + ATP + H2O = L-asparaginyl-tRNA(Asn) + L-glutamate + ADP + phosphate + 2 H(+). Allows the formation of correctly charged Asn-tRNA(Asn) or Gln-tRNA(Gln) through the transamidation of misacylated Asp-tRNA(Asn) or Glu-tRNA(Gln) in organisms which lack either or both of asparaginyl-tRNA or glutaminyl-tRNA synthetases. The reaction takes place in the presence of glutamine and ATP through an activated phospho-Asp-tRNA(Asn) or phospho-Glu-tRNA(Gln). This Burkholderia ambifaria (strain MC40-6) protein is Aspartyl/glutamyl-tRNA(Asn/Gln) amidotransferase subunit B.